The sequence spans 352 residues: Sperm equatorial segment protein 1 (352 aa).

The first 19 residues, 1–19 (MKSLVLLVALLLWSSSVPA), serve as a signal peptide directing secretion. Asn128 carries N-linked (GlcNAc...) asparagine glycosylation. The segment at 140–203 (IEKEEPEPEP…TESEDVPQLS (64 aa)) is disordered. Residues 166–193 (TESSTSPYVTSYKSPVTTSDRSTGIEIS) show a composition bias toward polar residues.

The protein belongs to the SPESP1 family. Post-translationally, glycosylated. In testis there are two predominant forms of 77- and 67-kDa and a form of 47-kDa, whereas in epididymal sperm from caput, corpus, and cauda there are two forms of 47- and 43-kDa. Testis forms contain complex carbohydrate residues. Epididymal sperm forms are N-glycosylated. Then undergoes significant glycosylation in the testis and that the majority of these glycoconjugates are removed by the time sperm reach the caput epididymis.

It localises to the cytoplasmic vesicle. It is found in the secretory vesicle. The protein localises to the acrosome. In terms of biological role, involved in fertilization ability of sperm. The sequence is that of Sperm equatorial segment protein 1 from Macaca fascicularis (Crab-eating macaque).